Here is a 590-residue protein sequence, read N- to C-terminus: V-type ATP synthase alpha chain (590 aa).

231–238 (GPFGSGKT) serves as a coordination point for ATP.

The protein belongs to the ATPase alpha/beta chains family.

It carries out the reaction ATP + H2O + 4 H(+)(in) = ADP + phosphate + 5 H(+)(out). Produces ATP from ADP in the presence of a proton gradient across the membrane. The V-type alpha chain is a catalytic subunit. The polypeptide is V-type ATP synthase alpha chain (Clostridium botulinum (strain Langeland / NCTC 10281 / Type F)).